The primary structure comprises 553 residues: Solute carrier family 45 member 3 (553 aa).

The next 11 membrane-spanning stretches (helical) occupy residues 19–39 (LLVN…ITYV), 52–72 (FMTM…PLLG), 88–108 (FIWA…RAGW), 120–140 (LELA…QVCF), 161–181 (YSVY…LPAI), 198–218 (CLFG…LLVA), 275–295 (FVAE…YTDF), 323–343 (MGSL…LVMD), 353–373 (AVYL…CLSH), 382–402 (AALT…LASL), and 522–542 (AYMV…TQVV).

The protein belongs to the glycoside-pentoside-hexuronide (GPH) cation symporter transporter (TC 2.A.2) family. In terms of tissue distribution, prostate specific. Expressed in all prostatic glandular cells. Expressed both in normal and cancerous prostates.

It localises to the membrane. It carries out the reaction sucrose(out) + H(+)(out) = sucrose(in) + H(+)(in). In terms of biological role, proton-associated sucrose transporter. May be able to transport also glucose and fructose. The chain is Solute carrier family 45 member 3 from Homo sapiens (Human).